The sequence spans 105 residues: TMEM14 protein homolog YJR085C (105 aa).

The next 3 helical transmembrane spans lie at 26 to 46, 53 to 73, and 77 to 97; these read IPSLVSGLVFGSVYGIAGYLL, GLEMALGASTLLLGAGVIRGM, and FTKPVPVVLTALGGLGSYYYY.

This sequence belongs to the TMEM14 family.

The protein localises to the mitochondrion. Its subcellular location is the membrane. This Saccharomyces cerevisiae (strain ATCC 204508 / S288c) (Baker's yeast) protein is TMEM14 protein homolog YJR085C.